The following is a 475-amino-acid chain: Ankyrin repeat, SAM and basic leucine zipper domain-containing protein 1 (475 aa).

The segment at 1-24 is disordered; that stretch reads MAGSLGNLVVAGGGESSDSEEDYW. Residues Ser16, Ser17, and Ser19 each carry the phosphoserine modification. ANK repeat units lie at residues 44–73, 77–106, 109–146, 147–176, 180–209, and 213–242; these read ERDETFKKALTSGDVSLVEELLNSGMSVES, FGWTPLMCAVNIANVELVRILLDRGANASF, DQYTILMAACAAHASESQILKTVELLLSRNANPNVACR, KCMTPVMYAAREGHAQVVALLVAHGAEINA, NGYTALTWAARHGHKSVVLKLLELGANKTI, and DGKTAGEIAKRNKHPELFTLLSLTVNPLQG. Residues 273-336 form the SAM domain; the sequence is TAFGDLEVFL…LDAVKELQVE (64 aa).

As to quaternary structure, interacts with DDX4, PIWIL1, RANBP9 and TDRD1.

Its subcellular location is the cytoplasm. Functionally, plays a central role during spermatogenesis by repressing transposable elements and preventing their mobilization, which is essential for the germline integrity. Acts via the piRNA metabolic process, which mediates the repression of transposable elements during meiosis by forming complexes composed of piRNAs and Piwi proteins and governs the methylation and subsequent repression of transposons. Its association with pi-bodies suggests a participation in the primary piRNAs metabolic process. Required prior to the pachytene stage to facilitate the production of multiple types of piRNAs, including those associated with repeats involved in the regulation of retrotransposons. May act by mediating protein-protein interactions during germ cell maturation. In Notamacropus eugenii (Tammar wallaby), this protein is Ankyrin repeat, SAM and basic leucine zipper domain-containing protein 1 (ASZ1).